Consider the following 379-residue polypeptide: dTDP-3-amino-3,4,6-trideoxy-alpha-D-glucose transaminase (379 aa).

Pyridoxal 5'-phosphate-binding positions include G67, Q167, 188-193 (SFYPGK), Y221, Y227, 235-237 (NSR), and Y318. Position 193 is an N6-(pyridoxal phosphate)lysine (K193).

It belongs to the degT/dnrJ/eryC1 family. Homodimer. Requires pyridoxal 5'-phosphate as cofactor.

It carries out the reaction dTDP-3-amino-3,4,6-trideoxy-alpha-D-glucose + 2-oxoglutarate = dTDP-3-dehydro-4,6-dideoxy-alpha-D-glucose + L-glutamate. It participates in antibiotic biosynthesis. In terms of biological role, involved in the biosynthesis of dTDP-alpha-D-desosamine, a sugar found in several bacterial macrolide antibiotics. Catalyzes the reversible transfer of the amino group from L-glutamate to the C-3 position of dTDP-3-keto-4,6-deoxyglucose to yield dTDP-3-amino-3,4,6-trideoxyglucose. The polypeptide is dTDP-3-amino-3,4,6-trideoxy-alpha-D-glucose transaminase (Streptomyces venezuelae).